The chain runs to 58 residues: Large ribosomal subunit protein uL30 (58 aa).

This sequence belongs to the universal ribosomal protein uL30 family. In terms of assembly, part of the 50S ribosomal subunit.

This Psychromonas ingrahamii (strain DSM 17664 / CCUG 51855 / 37) protein is Large ribosomal subunit protein uL30.